Reading from the N-terminus, the 51-residue chain is Large ribosomal subunit protein eL39 (51 aa).

It belongs to the eukaryotic ribosomal protein eL39 family.

The sequence is that of Large ribosomal subunit protein eL39 from Methanopyrus kandleri (strain AV19 / DSM 6324 / JCM 9639 / NBRC 100938).